Consider the following 444-residue polypeptide: Ribosome biogenesis protein YTM1 (444 aa).

The tract at residues 8 to 89 (VKLRFFTREE…ETFLNVEYTR (82 aa)) is ubiquitin-like (UBL) domain. WD repeat units lie at residues 99–138 (SFDNEDWVSSLDVGSNYIYSGSYDGIVRTYNLSGKVEKQY), 140–178 (GHSGPIRAVHYISSTRLVSAGNDRTLRLWKTKNDDLKSI), 194–231 (GHKAPVVSIDVSKDRILSASCDNTVSLWSTNYKEMTVI), 269–309 (SHSA…CVDT), 311–350 (TTSYSLLSVAQLPKLNLLACGSSARHITLHDPRVNSSSKI), 357–397 (GHKN…AMYT), and 408–444 (GVNDKVFAVKWAKGVGIISGGQDKKIQINKGDNIFSN). A sufficient for interaction with ERB1 and association with 66S pre-ribosomes region spans residues 99–444 (SFDNEDWVSS…INKGDNIFSN (346 aa)).

It belongs to the WD repeat WDR12/YTM1 family. In terms of assembly, component of the NOP7 complex, composed of ERB1, NOP7 and YTM1. The complex is held together by ERB1, which interacts with NOP7 via its N-terminal domain and with YTM1 via a high-affinity interaction between the seven-bladed beta-propeller domains of the 2 proteins. The NOP7 complex associates with the 66S pre-ribosome. Interacts (via UBL domain) with MDN1 (via VWFA/MIDAS domain).

The protein resides in the nucleus. It localises to the nucleolus. It is found in the nucleoplasm. Its function is as follows. Component of the NOP7 complex, which is required for maturation of the 25S and 5.8S ribosomal RNAs and formation of the 60S ribosome. The chain is Ribosome biogenesis protein YTM1 from Kluyveromyces lactis (strain ATCC 8585 / CBS 2359 / DSM 70799 / NBRC 1267 / NRRL Y-1140 / WM37) (Yeast).